We begin with the raw amino-acid sequence, 44 residues long: Cytochrome b559 subunit beta (44 aa).

Residues 17–41 (VRWLAVHTLAVPSVFFVGAIAAMQF) form a helical membrane-spanning segment. 2 residues coordinate heme: Arg-18 and His-23.

This sequence belongs to the PsbE/PsbF family. As to quaternary structure, heterodimer of an alpha subunit and a beta subunit. PSII is composed of 1 copy each of membrane proteins PsbA, PsbB, PsbC, PsbD, PsbE, PsbF, PsbH, PsbI, PsbJ, PsbK, PsbL, PsbM, PsbT, PsbX, PsbY, PsbZ, Psb30/Ycf12, peripheral proteins PsbO, CyanoQ (PsbQ), PsbU, PsbV and a large number of cofactors. It forms dimeric complexes. Requires heme b as cofactor.

It localises to the cellular thylakoid membrane. Functionally, this b-type cytochrome is tightly associated with the reaction center of photosystem II (PSII). PSII is a light-driven water:plastoquinone oxidoreductase that uses light energy to abstract electrons from H(2)O, generating O(2) and a proton gradient subsequently used for ATP formation. It consists of a core antenna complex that captures photons, and an electron transfer chain that converts photonic excitation into a charge separation. The chain is Cytochrome b559 subunit beta from Synechocystis sp. (strain ATCC 27184 / PCC 6803 / Kazusa).